The chain runs to 447 residues: Elongation factor 1-alpha (447 aa).

In terms of domain architecture, tr-type G spans 5 to 230 (KIHISIVVIG…DQINEPKRPS (226 aa)). The segment at 14-21 (GHVDSGKS) is G1. 14–21 (GHVDSGKS) is a binding site for GTP. At Lys-55 the chain carries N6,N6-dimethyllysine. Residues 70–74 (GITID) form a G2 region. An N6,N6,N6-trimethyllysine modification is found at Lys-79. The segment at 91–94 (DAPG) is G3. Residues 91–95 (DAPGH) and 153–156 (NKMD) each bind GTP. The interval 153–156 (NKMD) is G4. Lys-187 is modified (N6,N6,N6-trimethyllysine). The interval 194-196 (SGF) is G5. Position 261 is an N6-methyllysine (Lys-261). A 5-glutamyl glycerylphosphorylethanolamine modification is found at Glu-289. Lys-306 carries the N6,N6,N6-trimethyllysine modification. Glu-362 bears the 5-glutamyl glycerylphosphorylethanolamine mark. An N6,N6,N6-trimethyllysine modification is found at Lys-396.

It belongs to the TRAFAC class translation factor GTPase superfamily. Classic translation factor GTPase family. EF-Tu/EF-1A subfamily.

The protein localises to the cytoplasm. In terms of biological role, this protein promotes the GTP-dependent binding of aminoacyl-tRNA to the A-site of ribosomes during protein biosynthesis. The chain is Elongation factor 1-alpha from Hordeum vulgare (Barley).